The primary structure comprises 525 residues: GMP synthase [glutamine-hydrolyzing] (525 aa).

One can recognise a Glutamine amidotransferase type-1 domain in the interval 9–207 (RILILDFGSQ…VRDICQCEAL (199 aa)). Cysteine 86 serves as the catalytic Nucleophile. Active-site residues include histidine 181 and glutamate 183. Positions 208–400 (WTPAKIIDDA…LGLPYDMLYR (193 aa)) constitute a GMPS ATP-PPase domain. 235–241 (SGGVDSS) is a binding site for ATP.

Homodimer.

The enzyme catalyses XMP + L-glutamine + ATP + H2O = GMP + L-glutamate + AMP + diphosphate + 2 H(+). The protein operates within purine metabolism; GMP biosynthesis; GMP from XMP (L-Gln route): step 1/1. Functionally, catalyzes the synthesis of GMP from XMP. In Escherichia coli O8 (strain IAI1), this protein is GMP synthase [glutamine-hydrolyzing].